The sequence spans 854 residues: MKNNDKLDSHTPMMQQYLRLKAQHPEILLFYRMGDFYELFYSDAKRASQLLDISLTKRGASAGEPIPMAGVPYHSIENYLAKLVQLGESAAICEQIGDPATSKGPVERKVVRIVTPGTISDEALLQERQDNLLAAIWQDAKGFGYATLDISSGRFRVAEPADLETMAAELQRTNPAELLYPENFEPMSLIEHRHGLRRRPLWEFELDTAKQQLNLQFGTRDLIGFGVEQAHLALRAAGCLLQYVKDTQRTSLPHIRGLTMERQQDGIIMDAATRRNLELTQNLSGGSENTLAAILDCSVTPMGSRMLKRWLHMPIRDIRVLTDRQQAIGGLQDIAAELQTPLRQVGDLERILARLALRTARPRDLARMRHAFQQLPEIHRLLQPIDVPHVQNLLSQVGQFDELQDLLERAIVETPPVLVRDGGVIASGYNAELDEWRALADGATDYLDRLEIREREKLGLDTLKVGFNGVHGYYIQVSRGQSHLVPIHYVRRQTLKNAERYIIPELKEYEDKVLTSKGKALAIEKGLYEEIFDLLLPHLPELQLSANALAELDVLANLAERAETLNYSCPTLSDKPGIKIMGGRHPVVEQVLKEPFISNPLTLSPQRRMLIITGPNMGGKSTYMRQTALIVLLAHLGSYVPADQATIGPIDRIFTRVGAADDLASGRSTFMVEMTETANILHNATEQSLVLMDEIGRGTSTYDGLSLAWACAENLASRIKAMTLFATHYFELTTLPEKMEGVVNVHLDALEHGETIAFMHSVQEGAASKSYGLAVAALAGVPRDVIKRARQKLKELESLSNNAAASTIDGSQMTLLNEEIPPAVEALEALEALDPDSLSPRQALEWIYRLKNMV.

614–621 (GPNMGGKS) is a binding site for ATP.

The protein belongs to the DNA mismatch repair MutS family.

This protein is involved in the repair of mismatches in DNA. It is possible that it carries out the mismatch recognition step. This protein has a weak ATPase activity. The chain is DNA mismatch repair protein MutS from Yersinia pestis bv. Antiqua (strain Antiqua).